Reading from the N-terminus, the 282-residue chain is Probable endonuclease 4 (282 aa).

Residues His-69, His-109, Glu-145, Asp-179, His-182, His-216, Asp-229, His-231, and Glu-261 each contribute to the Zn(2+) site.

This sequence belongs to the AP endonuclease 2 family. The cofactor is Zn(2+).

It catalyses the reaction Endonucleolytic cleavage to 5'-phosphooligonucleotide end-products.. Its function is as follows. Endonuclease IV plays a role in DNA repair. It cleaves phosphodiester bonds at apurinic or apyrimidinic (AP) sites, generating a 3'-hydroxyl group and a 5'-terminal sugar phosphate. The sequence is that of Probable endonuclease 4 from Edwardsiella ictaluri (strain 93-146).